The primary structure comprises 56 residues: UPF0434 protein Sden_2197 (56 aa).

It belongs to the UPF0434 family.

In Shewanella denitrificans (strain OS217 / ATCC BAA-1090 / DSM 15013), this protein is UPF0434 protein Sden_2197.